Reading from the N-terminus, the 940-residue chain is Chordin (940 aa).

A signal peptide spans 1–19; it reads MMEGLLWILLSVIIASVHG. Residues 42-118 enclose the VWFC 1 domain; sequence SGCSFGGRFY…LPGHCCKTCP (77 aa). 4 consecutive CHRD domains span residues 162-277, 279-398, 404-519, and 525-652; these read TTTD…KHRA, FAET…GRRS, SVLS…LLPY, and RRNE…VPNH. N-linked (GlcNAc...) asparagine glycans are attached at residues Asn-347 and Asn-430. VWFC domains lie at 689–748, 767–836, and 855–919; these read HSCF…PICE, EGCY…KECP, and RLCK…PECI.

It belongs to the chordin family. Interacts with twsg1 and/or bmp4. In terms of processing, cleaved by tolloid proteases; cleavage participates in dorsoventral patterning during early development.

It localises to the secreted. Functionally, dorsalizing factor. Key developmental protein that dorsalizes early vertebrate embryonic tissues by binding to ventralizing TGF-beta family bone morphogenetic proteins (BMPs) and sequestering them in latent complexes. The chain is Chordin (chd) from Danio rerio (Zebrafish).